The primary structure comprises 114 residues: Large ribosomal subunit protein bL19 (114 aa).

The protein belongs to the bacterial ribosomal protein bL19 family.

In terms of biological role, this protein is located at the 30S-50S ribosomal subunit interface and may play a role in the structure and function of the aminoacyl-tRNA binding site. This Listeria welshimeri serovar 6b (strain ATCC 35897 / DSM 20650 / CCUG 15529 / CIP 8149 / NCTC 11857 / SLCC 5334 / V8) protein is Large ribosomal subunit protein bL19.